The sequence spans 780 residues: Gelsolin (780 aa).

A signal peptide spans 1–25 (MAPYCSSLRSALLVLALCALSPSHA). A disordered region spans residues 28 to 48 (ASRGRAQERAPQSRVSETRPS). The tract at residues 51-174 (VVEHPEFLKA…YKKGGVASGF (124 aa)) is actin-severing. A Gelsolin-like 1 repeat occupies 74–155 (FDLVPVPPNL…EVQGFESSTF (82 aa)). Tyr-84 carries the post-translational modification Phosphotyrosine. 6 residues coordinate Ca(2+): Gly-90, Asp-91, Glu-122, Asp-134, Gly-139, and Ala-141. The interval 121–124 (DESG) is actin-actin interfilament contact point. 160 to 167 (KSGLKYKK) provides a ligand contact to a 1,2-diacyl-sn-glycero-3-phospho-(1D-myo-inositol-4,5-bisphosphate). Val-170 lines the Ca(2+) pocket. An a 1,2-diacyl-sn-glycero-3-phospho-(1D-myo-inositol-4,5-bisphosphate)-binding site is contributed by 186 to 194 (RLFQVKGRR). One copy of the Gelsolin-like 2 repeat lies at 196-268 (VRATEVPVSW…SEEGSEPEAM (73 aa)). Positions 211 and 212 each coordinate Ca(2+). A disulfide bond links Cys-213 and Cys-226. Ca(2+)-binding residues include Glu-234, Asp-284, Glu-327, Asp-328, and Glu-352. Residues 244–286 (GIRDNERSGRAQVHVSEEGSEPEAMLQVLGPKPDLPQGTEDTA) are disordered. Residues 315–387 (DENPFAQSAL…LPEGGETPLF (73 aa)) form a Gelsolin-like 3 repeat. Phosphotyrosine is present on residues Tyr-407 and Tyr-463. The interval 432 to 780 (AAQHGMDDDG…LDRALAELAA (349 aa)) is actin-binding, Ca-sensitive. The Gelsolin-like 4 repeat unit spans residues 453-534 (SNKVLVDPAT…VQGKEPAHLM (82 aa)). Ca(2+)-binding residues include Gly-469, Asp-470, Glu-500, Asp-512, Gly-517, Pro-519, and Thr-549. The stretch at 576–640 (AVEVMPKAGA…EEGSEPDGFW (65 aa)) is one Gelsolin-like 5 repeat. At Lys-582 the chain carries N6-acetyllysine. Asn-589 and Asp-590 together coordinate Ca(2+). Position 601 is a phosphotyrosine (Tyr-601). Glu-612 lines the Ca(2+) pocket. A Phosphotyrosine modification is found at Tyr-649. Residues 679–754 (IEEVPGELMQ…VRQGFEPPSF (76 aa)) form a Gelsolin-like 6 repeat. Ca(2+)-binding residues include Asp-694, Asp-695, and Glu-717. Thr-740 is modified (phosphothreonine).

The protein belongs to the villin/gelsolin family. Binds to actin and to fibronectin. Identified in a complex composed of ACTA1, COBL, GSN and TMSB4X. Interacts with the inactive form of EIF2AK2/PKR. Interacts with FLII. Phosphorylated on tyrosine residues in vitro.

It localises to the secreted. The protein localises to the cytoplasm. The protein resides in the cytoskeleton. In terms of biological role, calcium-regulated, actin-modulating protein that binds to the plus (or barbed) ends of actin monomers or filaments, preventing monomer exchange (end-blocking or capping). It can promote the assembly of monomers into filaments (nucleation) as well as sever filaments already formed. Plays a role in ciliogenesis. The chain is Gelsolin (Gsn) from Rattus norvegicus (Rat).